Reading from the N-terminus, the 292-residue chain is MGIAESTPDELPSDAEEQLRSGDQQLELSGRRLRRLPSAVCALSRLQKLYVSGTGLRELPEEIEELRELRILALDFNKLERLPDGLCRLPRLTRLYLGGNRLLALPADFAQLQSLRCLWIEGNFLRRFPRPLLRLVALQSLQMGDNRLRALPAELPRMTGLRGLWLYGNRFEEFPPALLRMGRLHILDLDRNRLGGFPDLHPLRALRVFSYDHNPVTGPPRVADTVFLVGEGAVERMAERDEPTPRPPPRRPARAFEDEEEEDLLIGGAGSRALGAPGGSFRALEAAPGLGT.

Positions 1 to 20 (MGIAESTPDELPSDAEEQLR) are disordered. Acidic residues predominate over residues 7–16 (TPDELPSDAE). LRR repeat units lie at residues 22 to 43 (GDQQ…VCAL), 45 to 66 (RLQK…IEEL), 68 to 90 (ELRI…CRLP), 91 to 112 (RLTR…FAQL), 114 to 136 (SLRC…LRLV), 137 to 158 (ALQS…LPRM), 160 to 181 (GLRG…LLRM), 183 to 204 (RLHI…HPLR), and 205 to 226 (ALRV…ADTV). The tract at residues 236–261 (RMAERDEPTPRPPPRRPARAFEDEEE) is disordered.

This is Leucine-rich repeat-containing protein 10B (LRRC10B) from Homo sapiens (Human).